The primary structure comprises 579 residues: Arginine--tRNA ligase (579 aa).

Residues 123–133 (ANPTGPVHVGR) carry the 'HIGH' region motif.

Belongs to the class-I aminoacyl-tRNA synthetase family.

It is found in the cytoplasm. The catalysed reaction is tRNA(Arg) + L-arginine + ATP = L-arginyl-tRNA(Arg) + AMP + diphosphate. This chain is Arginine--tRNA ligase, found in Haloarcula marismortui (strain ATCC 43049 / DSM 3752 / JCM 8966 / VKM B-1809) (Halobacterium marismortui).